We begin with the raw amino-acid sequence, 1297 residues long: DNA-directed RNA polymerase subunit beta' (1297 aa).

Residues Cys-60, Cys-62, Cys-75, and Cys-78 each contribute to the Zn(2+) site. Mg(2+) is bound by residues Asp-535, Asp-537, and Asp-539. Cys-883, Cys-961, Cys-968, and Cys-971 together coordinate Zn(2+).

This sequence belongs to the RNA polymerase beta' chain family. The RNAP catalytic core consists of 2 alpha, 1 beta, 1 beta' and 1 omega subunit. When a sigma factor is associated with the core the holoenzyme is formed, which can initiate transcription. Requires Mg(2+) as cofactor. It depends on Zn(2+) as a cofactor.

The catalysed reaction is RNA(n) + a ribonucleoside 5'-triphosphate = RNA(n+1) + diphosphate. Functionally, DNA-dependent RNA polymerase catalyzes the transcription of DNA into RNA using the four ribonucleoside triphosphates as substrates. This is DNA-directed RNA polymerase subunit beta' from Salinispora arenicola (strain CNS-205).